Consider the following 2971-residue polypeptide: uncharacterized protein (2971 aa).

The tract at residues 929–964 is disordered; sequence SANFSNGPEESSLSTRLHIQKKRKAKKQRLETRRQK. Over residues 936 to 945 the composition is skewed to polar residues; that stretch reads PEESSLSTRL. A compositionally biased stretch (basic residues) spans 946–955; sequence HIQKKRKAKK.

It localises to the plastid. The protein localises to the chloroplast. This is an uncharacterized protein from Chlamydomonas reinhardtii (Chlamydomonas smithii).